The following is a 214-amino-acid chain: Protein PsaE (214 aa).

The signal sequence occupies residues 1–24; that stretch reads MSHCVVLNKLESVLIIGDSRYALS. The segment at residues 1–94 is a DNA-binding region (ompR/PhoB-type); it reads MSHCVVLNKL…YKNEGYSYQK (94 aa).

Required for expression of pH 6 antigen. The sequence is that of Protein PsaE (psaE) from Yersinia pseudotuberculosis serotype I (strain IP32953).